Reading from the N-terminus, the 528-residue chain is UDP-glucuronosyltransferase 1A9 (528 aa).

Residues 1 to 23 form the signal peptide; it reads MAPVAFPTSFFLCLLLASGLAQA. An N-linked (GlcNAc...) asparagine glycan is attached at N69. K97 is subject to N6-succinyllysine. N-linked (GlcNAc...) asparagine glycans are attached at residues N290 and N428. The chain crosses the membrane as a helical span at residues 486–506; that stretch reads VIGFLLAIVLTVVFIVFKCCA.

This sequence belongs to the UDP-glycosyltransferase family. Homodimer. Homooligomer. Interacts with UGT1A1, UGT1A3, UGT1A4, UGT1A6, UGT1A7, UGT1A8 and UGT1A10 to form heterodimers. In terms of tissue distribution, highly expressed in liver and at lower levels in stomach and kidney.

It is found in the endoplasmic reticulum membrane. The catalysed reaction is glucuronate acceptor + UDP-alpha-D-glucuronate = acceptor beta-D-glucuronoside + UDP + H(+). It carries out the reaction 2-hydroxy-17beta-estradiol + UDP-alpha-D-glucuronate = 2-hydroxy-17beta-estradiol 3-O-(beta-D-glucuronate) + UDP + H(+). It catalyses the reaction 4-hydroxy-17beta-estradiol + UDP-alpha-D-glucuronate = 17beta-estradiol 4-O-(beta-D-glucuronate) + UDP + H(+). The enzyme catalyses 2-hydroxyestrone + UDP-alpha-D-glucuronate = 2-hydroxyestrone 3-O-(beta-D-glucuronate) + UDP + H(+). The catalysed reaction is 4-hydroxyestrone + UDP-alpha-D-glucuronate = estrone 4-O-(beta-D-glucuronate) + UDP + H(+). It carries out the reaction prunetin + UDP-alpha-D-glucuronate = prunetin-5-O-beta-D-glucuronide + UDP. It catalyses the reaction 8-iso-prostaglandin F2alpha + UDP-alpha-D-glucuronate = 8-iso-prostaglandin F2alpha-glucuronide + UDP + H(+). The enzyme catalyses 5-epi-5-F2t-IsoP + UDP-alpha-D-glucuronate = 5-epi-5-F2t-IsoP-glucuronide + UDP + H(+). The catalysed reaction is (5Z,8Z,11Z,14Z)-eicosatetraenoate + UDP-alpha-D-glucuronate = O-[(5Z),(8Z),(11Z),(14Z)-eicosatetraenoyl]-beta-D-glucuronate + UDP. It carries out the reaction 15-hydroxy-(5Z,8Z,11Z,13E)-eicosatetraenoate + UDP-alpha-D-glucuronate = 15-O-(beta-D-glucuronosyl)-(5Z,8Z,11Z,14Z)-eicosatetraenoate + UDP + H(+). It catalyses the reaction prostaglandin B1 + UDP-alpha-D-glucuronate = 15-O-(beta-D-glucuronosyl)-prostaglandin B1 + UDP + H(+). The enzyme catalyses (E)-ferulate + UDP-alpha-D-glucuronate = (E)-4-O-(beta-D-glucuronosyl)-ferulate + UDP + H(+). The catalysed reaction is (E)-ferulate + UDP-alpha-D-glucuronate = (E)-ferulic acid beta-D-glucuronate ester + UDP. It carries out the reaction candesartan + UDP-alpha-D-glucuronate = candesartan O-beta-D-glucuronoside + UDP. It catalyses the reaction SN-38 + UDP-alpha-D-glucuronate = SN-38 O-beta-D-glucuronide + UDP + H(+). The enzyme catalyses mycophenolate + UDP-alpha-D-glucuronate = mycophenolate 7-O-beta-D-glucuronide + UDP + H(+). Functionally, UDP-glucuronosyltransferase (UGT) that catalyzes phase II biotransformation reactions in which lipophilic substrates are conjugated with glucuronic acid to increase the metabolite's water solubility, thereby facilitating excretion into either the urine or bile. Essential for the elimination and detoxification of drugs, xenobiotics and endogenous compounds. Catalyzes the glucuronidation of endogenous estrogen hormones such as estradiol and estrone. Involved in the glucuronidation of arachidonic acid (AA) and AA-derived eicosanoids including 15-HETE, PGB1 and F2-isoprostanes (8-iso-PGF2alpha and 5-epi-5-F2t-IsoP). Glucuronates the phytochemical ferulic acid efficently at both the phenolic or the carboxylic acid group. Also catalyzes the glucuronidation of the isoflavones genistein, daidzein, glycitein, formononetin, biochanin A and prunetin, which are phytoestrogens with anticancer and cardiovascular properties. Involved in the glucuronidation of the AGTR1 angiotensin receptor antagonist caderastan, a drug which can inhibit the effect of angiotensin II. Involved in the biotransformation of 7-ethyl-10-hydroxycamptothecin (SN-38), the pharmacologically active metabolite of the anticancer drug irinotecan. Also metabolizes mycophenolate, an immunosuppressive agent. The protein is UDP-glucuronosyltransferase 1A9 of Mus musculus (Mouse).